The sequence spans 633 residues: Beta-myrcene synthase TPS15CT (633 aa).

The N-terminal 55 residues, 1 to 55 (MHCMAVHQFSPSIVSSLPTISTYNNNHFCRFFTPKTSISPISKTKSKSSTCYPIQ), are a transit peptide targeting the chloroplast. (2E)-geranyl diphosphate contacts are provided by arginine 344, aspartate 381, aspartate 385, arginine 525, and aspartate 528. Mg(2+)-binding residues include aspartate 381 and aspartate 385. The short motif at 381-385 (DDIYD) is the DDXXD motif element. 3 residues coordinate Mg(2+): aspartate 528, threonine 532, and glutamate 536.

The protein belongs to the terpene synthase family. Tpsb subfamily. The cofactor is Mg(2+). Mn(2+) serves as cofactor.

The protein resides in the plastid. It localises to the chloroplast. It catalyses the reaction (2E)-geranyl diphosphate = beta-myrcene + diphosphate. Its pathway is secondary metabolite biosynthesis; terpenoid biosynthesis. Functionally, involved in monoterpene (C10) olefins biosynthesis, constituants of cannabinoids and terpenoids-rich resins. Catalyzes strictly the conversion of (2E)-geranyl diphosphate to beta-myrcene. This Cannabis sativa (Hemp) protein is Beta-myrcene synthase TPS15CT.